A 25-amino-acid polypeptide reads, in one-letter code: Flagellar filament core protein flaB3 (25 aa).

This sequence belongs to the bacterial flagellin family. As to quaternary structure, the flagellum consists of an outer layer composed of two sheath proteins, flaA1 (44 kDa) and flaA2 (35 kDa) around a core that contains three proteins flaB1 (37 kDa), flaB2 (34 kDa) and flaB3 (32 kDa).

It localises to the periplasmic flagellum. It is found in the periplasm. Its function is as follows. Component of the core of the flagella. This Brachyspira hyodysenteriae (Treponema hyodysenteriae) protein is Flagellar filament core protein flaB3 (flaB3).